A 386-amino-acid chain; its full sequence is MAAVETRVCETDGCSSEAKLQCPTCIKLGIQGSYFCSQECFKGSWATHKLLHKKAKDEKAKREVSSWTVEGDINTDPWAGYRYTGKLRPHYPLMPTRPVPSYIQRPDYADHPLGMSESEQALKGTSQIKLLSSEDIEGMRLVCRLAREVLDIAAGMIKPGVTTEEIDHAVHLACIARNCYPSPLNYYNFPKSCCTSVNEVICHGIPDRRPLQEGDIVNVDITLYRNGYHGDLNETFFVGEVDDGARKLVQTTYECLMQAIDAVKPGVRYRELGNIIQKHAQANGFSVVRSYCGHGIHKLFHTAPNVPHYAKNKAVGVMKSGHVFTIEPMICEGGWQDETWPDGWTAVTRDGKRSAQFEHTLLVTDTGCEILTRRLDSARPHFMSQF.

Position 2 is an N-acetylalanine (Ala-2). The segment at 6–59 (TRVCETDGCSSEAKLQCPTCIKLGIQGSYFCSQECFKGSWATHKLLHKKAKDEK) adopts a C6H2-type zinc-finger fold. The Zn(2+) site is built by Cys-9, Cys-14, Cys-22, Cys-25, Cys-36, Cys-40, His-48, and His-52. His-203 lines the a protein pocket. Residues Asp-220, Asp-231, and His-294 each contribute to the Zn(2+) site. His-301 is an a protein binding site. 2 residues coordinate Zn(2+): Glu-327 and Glu-358.

It belongs to the peptidase M24A family. Methionine aminopeptidase type 1 subfamily. Associates with the 60S ribosomal subunit of the 80S translational complex. Zn(2+) is required as a cofactor. Requires Co(2+) as cofactor. Mn(2+) serves as cofactor. The cofactor is Fe(2+).

It is found in the cytoplasm. The catalysed reaction is Release of N-terminal amino acids, preferentially methionine, from peptides and arylamides.. Its function is as follows. Cotranslationally removes the N-terminal methionine from nascent proteins. The N-terminal methionine is often cleaved when the second residue in the primary sequence is small and uncharged (Met-Ala-, Cys, Gly, Pro, Ser, Thr, or Val). The protein is Methionine aminopeptidase 1 (METAP1) of Pongo abelii (Sumatran orangutan).